A 296-amino-acid polypeptide reads, in one-letter code: Ribosome biogenesis GTPase A (296 aa).

The 165-residue stretch at 14–178 (RRQVTEKLKL…LLDTPGILWP (165 aa)) folds into the CP-type G domain. Residues 58 to 61 (NKAD), 130 to 135 (NVGKST), and glycine 174 each bind GTP.

It belongs to the TRAFAC class YlqF/YawG GTPase family. MTG1 subfamily. As to quaternary structure, interacts with ctc. Interacts with the immature 50S ribosome subunit. 2 molecules of rbgA bind to one 50S subunit.

It localises to the cytoplasm. Essential protein that is required for a late step of 50S ribosomal subunit assembly. Has GTPase activity that is stimulated by interaction with the immature 50S ribosome subunit. Binds to the 23S rRNA. Required for the association of ribosomal proteins rplP and rpmA with the large subunit. The sequence is that of Ribosome biogenesis GTPase A from Bacillus cereus (strain ATCC 14579 / DSM 31 / CCUG 7414 / JCM 2152 / NBRC 15305 / NCIMB 9373 / NCTC 2599 / NRRL B-3711).